The chain runs to 519 residues: Glutamate--cysteine ligase (519 aa).

It belongs to the glutamate--cysteine ligase type 1 family. Type 1 subfamily.

It carries out the reaction L-cysteine + L-glutamate + ATP = gamma-L-glutamyl-L-cysteine + ADP + phosphate + H(+). Its pathway is sulfur metabolism; glutathione biosynthesis; glutathione from L-cysteine and L-glutamate: step 1/2. The protein is Glutamate--cysteine ligase of Edwardsiella ictaluri (strain 93-146).